A 55-amino-acid chain; its full sequence is uncharacterized protein (55 aa).

This is an uncharacterized protein from Thermoproteus tenax (TTV1).